We begin with the raw amino-acid sequence, 650 residues long: ATP-dependent DNA helicase PIF1 (650 aa).

The segment at 14-192 (MPSSTEAATD…ALEKRPMESQ (179 aa)) is PINT. Serine 40 and serine 164 each carry phosphoserine. A disordered region spans residues 171–199 (LQRAAATKAPDSALEKRPMESQTSTEAPR). Residue 237 to 244 (GSAGTGKS) coordinates ATP. The DNA-binding element occupies 586 to 605 (QAYVALSRARSLQGLRVLDF). The disordered stretch occupies residues 631–650 (LESQDDEEANSDLENMDPNL). The segment covering 633 to 650 (SQDDEEANSDLENMDPNL) has biased composition (acidic residues).

It belongs to the helicase family. PIF1 subfamily. Monomer. Interacts with telomerase. The cofactor is Mg(2+).

It localises to the nucleus. Its subcellular location is the mitochondrion. The enzyme catalyses Couples ATP hydrolysis with the unwinding of duplex DNA at the replication fork by translocating in the 5'-3' direction. This creates two antiparallel DNA single strands (ssDNA). The leading ssDNA polymer is the template for DNA polymerase III holoenzyme which synthesizes a continuous strand.. The catalysed reaction is ATP + H2O = ADP + phosphate + H(+). Functionally, DNA-dependent ATPase and 5'-3' DNA helicase required for the maintenance of both mitochondrial and nuclear genome stability. Efficiently unwinds G-quadruplex (G4) DNA structures and forked RNA-DNA hybrids. Resolves G4 structures, preventing replication pausing and double-strand breaks (DSBs) at G4 motifs. Involved in the maintenance of telomeric DNA. Inhibits telomere elongation, de novo telomere formation and telomere addition to DSBs via catalytic inhibition of telomerase. Reduces the processivity of telomerase by displacing active telomerase from DNA ends. Releases telomerase by unwinding the short telomerase RNA/telomeric DNA hybrid that is the intermediate in the telomerase reaction. Possesses an intrinsic strand annealing activity. The chain is ATP-dependent DNA helicase PIF1 from Mus musculus (Mouse).